Consider the following 172-residue polypeptide: MKQHPLAQYLEAVPDFPKEGILFQDISPLLRDHFVATIDAMSLLFSAKEWAEVDYLVGVESRGFIFASALALKHDKGFVKVRKPGKLPNVHASMEYGLEYGTDKLEMQKGNGKKVIICDDLIATGGSMQAAAKLCNEVGYEVVGMACLVDLKALNSFSHDGMTVRSVIQFDD.

It belongs to the purine/pyrimidine phosphoribosyltransferase family. As to quaternary structure, homodimer.

It is found in the cytoplasm. It carries out the reaction AMP + diphosphate = 5-phospho-alpha-D-ribose 1-diphosphate + adenine. It functions in the pathway purine metabolism; AMP biosynthesis via salvage pathway; AMP from adenine: step 1/1. In terms of biological role, catalyzes a salvage reaction resulting in the formation of AMP, that is energically less costly than de novo synthesis. The polypeptide is Adenine phosphoribosyltransferase (Hydrogenovibrio crunogenus (strain DSM 25203 / XCL-2) (Thiomicrospira crunogena)).